The chain runs to 315 residues: Homocysteine S-methyltransferase YbgG (315 aa).

One can recognise a Hcy-binding domain in the interval 2–309; it reads NPIQHILDTY…ENIQEIAAWA (308 aa). Residues cysteine 229, cysteine 294, and cysteine 295 each coordinate Zn(2+).

The cofactor is Zn(2+).

It catalyses the reaction S-methyl-L-methionine + L-homocysteine = 2 L-methionine + H(+). In Bacillus subtilis (strain 168), this protein is Homocysteine S-methyltransferase YbgG (ybgG).